We begin with the raw amino-acid sequence, 357 residues long: Membrane-bound lytic murein transglycosylase C (357 aa).

The first 16 residues, 1–16 (MKKILPLVIIAPLLIS), serve as a signal peptide directing secretion. Cys-17 carries N-palmitoyl cysteine lipidation. Cys-17 is lipidated: S-diacylglycerol cysteine.

Belongs to the transglycosylase Slt family.

It localises to the cell outer membrane. It carries out the reaction Exolytic cleavage of the (1-&gt;4)-beta-glycosidic linkage between N-acetylmuramic acid (MurNAc) and N-acetylglucosamine (GlcNAc) residues in peptidoglycan, from either the reducing or the non-reducing ends of the peptidoglycan chains, with concomitant formation of a 1,6-anhydrobond in the MurNAc residue.. Its function is as follows. Murein-degrading enzyme. May play a role in recycling of muropeptides during cell elongation and/or cell division. The chain is Membrane-bound lytic murein transglycosylase C from Sodalis glossinidius (strain morsitans).